The chain runs to 395 residues: Tryptophan synthase beta chain (395 aa).

At K86 the chain carries N6-(pyridoxal phosphate)lysine.

The protein belongs to the TrpB family. As to quaternary structure, tetramer of two alpha and two beta chains. Pyridoxal 5'-phosphate serves as cofactor.

The catalysed reaction is (1S,2R)-1-C-(indol-3-yl)glycerol 3-phosphate + L-serine = D-glyceraldehyde 3-phosphate + L-tryptophan + H2O. It participates in amino-acid biosynthesis; L-tryptophan biosynthesis; L-tryptophan from chorismate: step 5/5. Its function is as follows. The beta subunit is responsible for the synthesis of L-tryptophan from indole and L-serine. The chain is Tryptophan synthase beta chain from Pseudoalteromonas atlantica (strain T6c / ATCC BAA-1087).